Consider the following 164-residue polypeptide: Ribosome maturation factor RimM (164 aa).

Residues 92–164 (PDSEYYVANL…FVVIVPPEFI (73 aa)) enclose the PRC barrel domain.

Belongs to the RimM family. In terms of assembly, binds ribosomal protein uS19.

The protein localises to the cytoplasm. In terms of biological role, an accessory protein needed during the final step in the assembly of 30S ribosomal subunit, possibly for assembly of the head region. Essential for efficient processing of 16S rRNA. May be needed both before and after RbfA during the maturation of 16S rRNA. It has affinity for free ribosomal 30S subunits but not for 70S ribosomes. This is Ribosome maturation factor RimM from Orientia tsutsugamushi (strain Ikeda) (Rickettsia tsutsugamushi).